The primary structure comprises 189 residues: Nuclear distribution protein nudE homolog 1 (189 aa).

Residues 4–121 adopt a coiled-coil conformation; the sequence is NLDLETAIQI…LRVSKEEATS (118 aa). Residues 114–126 are compositionally biased toward basic and acidic residues; the sequence is VSKEEATSGETRR. The segment at 114–139 is disordered; that stretch reads VSKEEATSGETRRNTRSLPSQNKKMK.

Belongs to the nudE family. As to quaternary structure, self-associates. Interacts with PAC1.

It localises to the nucleus. The protein resides in the cytoplasm. The protein localises to the cytoskeleton. In terms of biological role, required for nuclear migration to the bud neck during cell division. Targets cytoplasmic dynein to microtubule plus ends thereby promoting dynein-mediated microtubule sliding along the bud cortex and consequently the movement of the mitotic spindle to the bud neck. The chain is Nuclear distribution protein nudE homolog 1 (NDL1) from Saccharomyces cerevisiae (strain ATCC 204508 / S288c) (Baker's yeast).